The chain runs to 471 residues: Alpha-galactosidase 1 (471 aa).

Positions 1–18 are cleaved as a signal peptide; that stretch reads MFAFYFLTACISLKGVFG. Cysteine 42 and cysteine 74 are disulfide-bonded. Substrate contacts are provided by aspartate 72 and aspartate 73. An N-linked (GlcNAc...) asparagine glycan is attached at asparagine 105. Cysteine 121 and cysteine 151 are oxidised to a cystine. Lysine 147 is a substrate binding site. The active-site Nucleophile is the aspartate 149. A glycan (N-linked (GlcNAc...) asparagine) is linked at asparagine 175. Arginine 205 contacts substrate. Aspartate 209 acts as the Proton donor in catalysis. Disulfide bonds link cysteine 221/cysteine 237 and cysteine 223/cysteine 230. Glutamine 251 serves as a coordination point for substrate. Asparagine 270, asparagine 370, asparagine 403, asparagine 413, asparagine 422, asparagine 435, and asparagine 454 each carry an N-linked (GlcNAc...) asparagine glycan.

Belongs to the glycosyl hydrolase 27 family. In terms of assembly, homotetramer.

It localises to the secreted. It catalyses the reaction Hydrolysis of terminal, non-reducing alpha-D-galactose residues in alpha-D-galactosides, including galactose oligosaccharides, galactomannans and galactolipids.. This chain is Alpha-galactosidase 1 (MEL1), found in Saccharomyces cerevisiae (Baker's yeast).